A 294-amino-acid polypeptide reads, in one-letter code: Glucosamine kinase GspK (294 aa).

Threonine 12 is an ATP binding site. Substrate is bound at residue aspartate 101. Residue threonine 122 participates in ATP binding. Residues 139–141 and aspartate 146 each bind substrate; that span reads GRE. Glycine 202 lines the ATP pocket.

The protein belongs to the eukaryotic-type N-acetylglucosamine kinase family.

It is found in the cytoplasm. The catalysed reaction is D-glucosamine + ATP = D-glucosamine 6-phosphate + ADP + H(+). In terms of biological role, ATP-dependent kinase, which is specific for glucosamine. Does not show kinase activity with any other sugar. The protein is Glucosamine kinase GspK (gspK) of Vibrio cholerae serotype O1 (strain ATCC 39315 / El Tor Inaba N16961).